Reading from the N-terminus, the 289-residue chain is tRNA pseudouridine synthase B (289 aa).

Residue aspartate 38 is the Nucleophile of the active site.

It belongs to the pseudouridine synthase TruB family. Type 1 subfamily.

The catalysed reaction is uridine(55) in tRNA = pseudouridine(55) in tRNA. Its function is as follows. Responsible for synthesis of pseudouridine from uracil-55 in the psi GC loop of transfer RNAs. This chain is tRNA pseudouridine synthase B, found in Acaryochloris marina (strain MBIC 11017).